Here is a 268-residue protein sequence, read N- to C-terminus: NH(3)-dependent NAD(+) synthetase (268 aa).

Residue 45–52 (GLSGGIDS) coordinates ATP. Residue aspartate 51 coordinates Mg(2+). Arginine 129 serves as a coordination point for deamido-NAD(+). Residue threonine 149 participates in ATP binding. Glutamate 154 provides a ligand contact to Mg(2+). 2 residues coordinate deamido-NAD(+): lysine 162 and aspartate 169. ATP contacts are provided by lysine 178 and threonine 200. 260–261 (HK) is a binding site for deamido-NAD(+).

It belongs to the NAD synthetase family. As to quaternary structure, homodimer.

The enzyme catalyses deamido-NAD(+) + NH4(+) + ATP = AMP + diphosphate + NAD(+) + H(+). The protein operates within cofactor biosynthesis; NAD(+) biosynthesis; NAD(+) from deamido-NAD(+) (ammonia route): step 1/1. Functionally, catalyzes the ATP-dependent amidation of deamido-NAD to form NAD. Uses ammonia as a nitrogen source. This Halobacterium salinarum (strain ATCC 29341 / DSM 671 / R1) protein is NH(3)-dependent NAD(+) synthetase.